Here is a 283-residue protein sequence, read N- to C-terminus: Phosphatidylglycerol--prolipoprotein diacylglyceryl transferase (283 aa).

Transmembrane regions (helical) follow at residues 14-34, 56-76, and 88-108; these read LGPL…ALFL, MLMY…VLFY, and IFMV…VLIA. Arg-139 contributes to the a 1,2-diacyl-sn-glycero-3-phospho-(1'-sn-glycerol) binding site. A helical membrane pass occupies residues 258-278; it reads MGQWLSLPMIVIGVALLVFFG.

The protein belongs to the Lgt family.

The protein resides in the cell inner membrane. It carries out the reaction L-cysteinyl-[prolipoprotein] + a 1,2-diacyl-sn-glycero-3-phospho-(1'-sn-glycerol) = an S-1,2-diacyl-sn-glyceryl-L-cysteinyl-[prolipoprotein] + sn-glycerol 1-phosphate + H(+). Its pathway is protein modification; lipoprotein biosynthesis (diacylglyceryl transfer). In terms of biological role, catalyzes the transfer of the diacylglyceryl group from phosphatidylglycerol to the sulfhydryl group of the N-terminal cysteine of a prolipoprotein, the first step in the formation of mature lipoproteins. The polypeptide is Phosphatidylglycerol--prolipoprotein diacylglyceryl transferase (Chromobacterium violaceum (strain ATCC 12472 / DSM 30191 / JCM 1249 / CCUG 213 / NBRC 12614 / NCIMB 9131 / NCTC 9757 / MK)).